A 691-amino-acid polypeptide reads, in one-letter code: MVNVFVDGLSVEVKKGATILQACAQVGIEIPRFCYHERLSIAGNCRMCLVEVEKSPKPVASCAMPVMDNMKIFTNTPLVKKAREGVLEFLLVNHPLDCPICDQGGECDLQDLTMVYGSDRGRFHEYKRGVEDKNIGPLVKTVMTRCIHCTRCVRFATEVAGVPDLGTVGRGRDTEISTYIQKVFNSELSGNVIDLCPVGALTSKPYAFTARSWELQSTESIDVSDAIGSNIRIDVRGSEIMRILPRLNEDVNEEWISDKARFCYDGLKRQRLNNPIIKENGQYKTVTWEKAFNFILKNLQEIQNSNRIVGVVGNLMDVESILLFKELLNKLGSSKIYLESSTPILQLNDDEKEDQILNNADFRNNYISNTPLAKIEESDLCLLIGTNIRLEAPLLNTRIRKRYLQGNYSVYSVGPTNNLTYNTENLGNDISTLLEISEGRHPFCKKLMKSKKPLIIIGTHVLQRTDGTSIIELVKTLFKYTQIKTSNWNGFNILHTSASSVGALDLGIGSTKRYSEKISNSKIEKHFIYLLGADEIRIENSKEHFIVYQGHHGDYGANIADVILPGSAYTEKTATYVNVEGRVQNTKSAFYAPGNAREDWKIIRALSEVLNKKLPYDSFEDIHTRFMSIAPHLLKVNAIEKNKIVIENSLPFKGLIKNIGFKPLFNNFYLTNAICRSSQTMAKCSSIYKLN.

The 78-residue stretch at 1–78 (MVNVFVDGLS…NMKIFTNTPL (78 aa)) folds into the 2Fe-2S ferredoxin-type domain. [2Fe-2S] cluster contacts are provided by C34, C45, C48, and C62. Residues 78 to 117 (LVKKAREGVLEFLLVNHPLDCPICDQGGECDLQDLTMVYG) enclose the 4Fe-4S His(Cys)3-ligated-type domain. Positions 94, 98, 101, 107, 146, 149, 152, and 196 each coordinate [4Fe-4S] cluster. In terms of domain architecture, 4Fe-4S Mo/W bis-MGD-type spans 215–271 (LQSTESIDVSDAIGSNIRIDVRGSEIMRILPRLNEDVNEEWISDKARFCYDGLKRQR).

Belongs to the complex I 75 kDa subunit family. In terms of assembly, complex I is composed of about 30 different subunits. [2Fe-2S] cluster serves as cofactor. The cofactor is [4Fe-4S] cluster.

The protein resides in the mitochondrion inner membrane. The enzyme catalyses a ubiquinone + NADH + 5 H(+)(in) = a ubiquinol + NAD(+) + 4 H(+)(out). Core subunit of the mitochondrial membrane respiratory chain NADH dehydrogenase (Complex I) that is believed to belong to the minimal assembly required for catalysis. Complex I functions in the transfer of electrons from NADH to the respiratory chain. The immediate electron acceptor for the enzyme is believed to be ubiquinone. This is the largest subunit of complex I and it is a component of the iron-sulfur (IP) fragment of the enzyme. It may form part of the active site crevice where NADH is oxidized. This Reclinomonas americana protein is NADH-ubiquinone oxidoreductase 75 kDa subunit (NAD11).